We begin with the raw amino-acid sequence, 734 residues long: Elongation factor 2 (734 aa).

The tr-type G domain maps to 18 to 259 (EQIRNIGITA…MVVKYVPNPR (242 aa)). GTP contacts are provided by residues 27-34 (AHVDHGKT), 93-97 (DTPGH), and 147-150 (NKID). Residue His600 is modified to Diphthamide.

It belongs to the TRAFAC class translation factor GTPase superfamily. Classic translation factor GTPase family. EF-G/EF-2 subfamily.

Its subcellular location is the cytoplasm. Its function is as follows. Catalyzes the GTP-dependent ribosomal translocation step during translation elongation. During this step, the ribosome changes from the pre-translocational (PRE) to the post-translocational (POST) state as the newly formed A-site-bound peptidyl-tRNA and P-site-bound deacylated tRNA move to the P and E sites, respectively. Catalyzes the coordinated movement of the two tRNA molecules, the mRNA and conformational changes in the ribosome. In Desulfurococcus mucosus (Desulfurococcus mobilis), this protein is Elongation factor 2 (fusA).